The primary structure comprises 92 residues: MGRSLKKGPFVDDHLMKKIETLNESNDKKVVKTWSRRSTIFPEFVGHTIAVYDGRKHVPVYISEDMVGHKLGEFAPTRTYKGHAADDKKTRR.

It belongs to the universal ribosomal protein uS19 family.

Functionally, protein S19 forms a complex with S13 that binds strongly to the 16S ribosomal RNA. This chain is Small ribosomal subunit protein uS19 (rpsS), found in Halalkalibacterium halodurans (strain ATCC BAA-125 / DSM 18197 / FERM 7344 / JCM 9153 / C-125) (Bacillus halodurans).